The following is a 1665-amino-acid chain: Mediator of RNA polymerase II transcription subunit 13 (1665 aa).

4 disordered regions span residues 411-460 (KETE…IDKN), 482-512 (INLDSKIMPPDSTSEEAVPDKENFKPKETKP), 551-580 (TVSQSAVTTNPPSVGSAPGPAPGPAPGTET), and 673-781 (LDSS…NQIS). Residues 415–445 (PENESENDMEIDDLFGGDESDDNDDLEEAGN) show a composition bias toward acidic residues. A compositionally biased stretch (basic and acidic residues) spans 499-512 (VPDKENFKPKETKP). A compositionally biased stretch (low complexity) spans 551–568 (TVSQSAVTTNPPSVGSAP). Acidic residues predominate over residues 682–720 (EGGEDIEDDDNDYEDEGDDDEEEEGEEEEEEESDEDEIS). Residues 728-762 (LKLNTQNESVPPQQSNYNPVNITDSGSNTTNNITD) are compositionally biased toward polar residues.

The protein belongs to the Mediator complex subunit 13 family. As to quaternary structure, component of the SRB8-11 complex, which itself associates with the Mediator complex.

Its subcellular location is the nucleus. In terms of biological role, component of the SRB8-11 complex. The SRB8-11 complex is a regulatory module of the Mediator complex which is itself involved in regulation of basal and activated RNA polymerase II-dependent transcription. The SRB8-11 complex may be involved in the transcriptional repression of a subset of genes regulated by Mediator. It may inhibit the association of the Mediator complex with RNA polymerase II to form the holoenzyme complex. In Candida albicans (strain SC5314 / ATCC MYA-2876) (Yeast), this protein is Mediator of RNA polymerase II transcription subunit 13 (SSN2).